The sequence spans 464 residues: Argininosuccinate lyase (464 aa).

It belongs to the lyase 1 family. Argininosuccinate lyase subfamily.

The protein resides in the cytoplasm. It carries out the reaction 2-(N(omega)-L-arginino)succinate = fumarate + L-arginine. It participates in amino-acid biosynthesis; L-arginine biosynthesis; L-arginine from L-ornithine and carbamoyl phosphate: step 3/3. This Sulfurovum sp. (strain NBC37-1) protein is Argininosuccinate lyase.